The sequence spans 95 residues: Glycophorin-C (95 aa).

Residues 1 to 25 are Extracellular-facing; sequence MSSPVRTPPPERLEPNPGMSYAVME. Residues 26 to 46 form a helical; Signal-anchor for type III membrane protein membrane-spanning segment; the sequence is IAIIAAVITAVALVLVCLLFL. Residues 47–95 lie on the Cytoplasmic side of the membrane; the sequence is MLRYLYRHKGTYYTNEAKGTEFAESADAALQSDPALQDAGDTSKKEYFI. 3 positions are modified to phosphoserine: Ser71, Ser78, and Ser89.

It belongs to the glycophorin-C family.

It localises to the cell membrane. The sequence is that of Glycophorin-C (Gypc) from Rattus norvegicus (Rat).